The primary structure comprises 816 residues: MNSEYNAQKIEAQAQKYWQENKSFEVSEDTSKEKYYCLSMFPYPSGSLHMGHVRNYSIGDVISRYQKMQGKNVMQPIGWDGFGLPAENAALENKVSPAKWTYENIDYMRDQLSKLGFGYDWSREIATCHQKYYRWEQWLFIKLFEKDLVYKKNAIVNWDPVDQTVLANEQVIDGRGWRSNALIEKKKISQWFMRITNYADELIYGLDKLDGWPDAVKTMQKNWIGKSVGLEVDFPRHNADSIKVYTTRPDTLMGVTYLVISSEHPIALEAGKNNPQVQAFIDECKTIQITKETMKTIDKKGIDLGVKCIHPITSDDVPIWIANFVLIGYGTGAVMSVPAHDKRDYEFAKKYGIAIKKVINENISIDKNAMTDKGVLFNSGEFNGLNFDQAFNEIAKTLTDKNLGRKKTNYRLQDWGISRQRYWGCPIPIINCQNCGIVVVPEADLPVVLPEVMSFDSVGSLIKKMPEFYQTTCPKCGKMAQQETDTLDTFFESSWYFARYTCKDNNDKMLDKRANYWLANGGVDQYIGGIEHAILHLLYARFFNKLLRDEGFIKNDEPFKNLLTQGMVLKDGAKMSKSKGNTVDPAQMIEKYGADTVRLFILFAAPPTQNLEWSDSGLEGVHRFINKVYRLIMDFIQDHKSHAIGTLNNFDKAQKDIRLKTHQTLSKITDNMSRRYLFNTVIAALMKLCNTLSKFNDTSKTSMAIRQESIHILLKTLSPIAPHLCHYLWKKLGNIKAIINEPWPNVDKSALVQDKMQIIVQVNGKLRTKLMFSTDVDNAQIEAQTLANENITKFTKGKIIVKVIIVPNKLVNIVVK.

Positions 42-52 (PYPSGSLHMGH) match the 'HIGH' region motif. A 'KMSKS' region motif is present at residues 574–578 (KMSKS). Lysine 577 is an ATP binding site.

It belongs to the class-I aminoacyl-tRNA synthetase family.

It is found in the cytoplasm. It catalyses the reaction tRNA(Leu) + L-leucine + ATP = L-leucyl-tRNA(Leu) + AMP + diphosphate. In Ruthia magnifica subsp. Calyptogena magnifica, this protein is Leucine--tRNA ligase.